The primary structure comprises 77 residues: Apelin (77 aa).

An N-terminal signal peptide occupies residues methionine 1–glycine 22. The propeptide occupies glycine 23–tyrosine 41. A disordered region spans residues valine 43–phenylalanine 77. Residues glycine 58–histidine 71 are compositionally biased toward basic residues. At glutamine 65 the chain carries Pyrrolidone carboxylic acid.

Belongs to the apelin family. Post-translationally, at least 5 active peptides may be produced by proteolytic processing of the peptide precursor.

It localises to the secreted. The protein localises to the extracellular space. Functionally, peptide hormone that functions as endogenous ligand for the G-protein-coupled apelin receptor (APLNR/APJ), that plays a role in cadiovascular homeostasis. Functions as a balanced agonist activating both G(i) protein pathway and beta-arrestin pathway of APLNR. Downstream G proteins activation, apelin can inhibit cAMP production and activate key intracellular effectors such as ERKs. On the other hand, APLNR activation induces beta-arrestin recruitment to the membrane leading to desensitization and internalization of the receptor. Apelin blunts cardiac hypertrophic induction from APLNR on response to pathological stimuli, but also induces myocardial hypertrophy under normal conditions. Apelin-36 dissociates more hardly than (pyroglu)apelin-13 from APLNR. Involved in the regulation of cardiac precursor cell movements during gastrulation and heart morphogenesis. Has an inhibitory effect on cytokine production in response to T-cell receptor/CD3 cross-linking; the oral intake of apelin in the colostrum and the milk might therefore modulate immune responses in neonates. Plays a role in early coronary blood vessels formation. Mediates myocardial contractility in an ERK1/2-dependent manner. May also have a role in the central control of body fluid homeostasis by influencing vasopressin release and drinking behavior. This chain is Apelin (APLN), found in Bos taurus (Bovine).